The sequence spans 458 residues: Delta(8)-fatty-acid desaturase (458 aa).

One can recognise a Cytochrome b5 heme-binding domain in the interval 16 to 100 (KKYITSKELK…LKDYQVSDIS (85 aa)). H51 and H74 together coordinate heme. 2 consecutive transmembrane segments (helical) span residues 122–142 (GVIY…YGVL) and 147–167 (FWIH…IAYL). Positions 169 to 173 (HDAGH) match the Histidine box-1 motif. The helical transmembrane segment at 185–205 (FAGIFIGNCITGISIAWWKWT) threads the bilayer. The Histidine box-2 signature appears at 206 to 210 (HNAHH). The next 3 membrane-spanning stretches (helical) occupy residues 264–284 (YYPI…LLLI), 293–313 (GLNI…VSRL), and 320–340 (VAFV…FTLN). A Histidine box-3 motif is present at residues 383-387 (QLEHH).

The protein belongs to the fatty acid desaturase type 1 family. Requires Fe cation as cofactor.

It is found in the membrane. The catalysed reaction is an N-acyl-(4R)-4-hydroxysphinganine + 2 Fe(II)-[cytochrome b5] + O2 + 2 H(+) = a (4R,8E)-4-hydroxysphingenine ceramide + 2 Fe(III)-[cytochrome b5] + 2 H2O. It catalyses the reaction an N-acyl-(4R)-4-hydroxysphinganine + 2 Fe(II)-[cytochrome b5] + O2 + 2 H(+) = a (4R,8Z)-4-hydroxysphing-8-enine ceramide + 2 Fe(III)-[cytochrome b5] + 2 H2O. Plays a major role as delta(8)-fatty-acid desaturase which introduces a double bond at the 8-position in the long-chain base (LCB) of ceramides with or without a hydroxy group at the 4-position. The enzyme produces both the 8E and 8Z isomers. This structural modification contributes to the quantitative partitioning of ceramides between the two major sphingolipid classes, glucosylceramides and glycosylinositolphosphoryl ceramides. Sphingolipids are important membrane components involved in environmental stress responses, such as resistance to chilling, and act as cell signaling molecules. This chain is Delta(8)-fatty-acid desaturase (sld1), found in Helianthus annuus (Common sunflower).